Consider the following 331-residue polypeptide: Flagellar P-ring protein (331 aa).

The signal sequence occupies residues 1–25; it reads MKKRLAVLLVIVLTITFSFSVTTRI.

It belongs to the FlgI family. As to quaternary structure, the basal body constitutes a major portion of the flagellar organelle and consists of four rings (L,P,S, and M) mounted on a central rod.

It localises to the periplasm. It is found in the bacterial flagellum basal body. Assembles around the rod to form the L-ring and probably protects the motor/basal body from shearing forces during rotation. The protein is Flagellar P-ring protein of Thermotoga petrophila (strain ATCC BAA-488 / DSM 13995 / JCM 10881 / RKU-1).